Consider the following 184-residue polypeptide: Cytidylate kinase (184 aa).

8 to 16 contacts ATP; that stretch reads GQPGSGKTT.

The protein belongs to the cytidylate kinase family. Type 2 subfamily.

The protein resides in the cytoplasm. It catalyses the reaction CMP + ATP = CDP + ADP. The enzyme catalyses dCMP + ATP = dCDP + ADP. This chain is Cytidylate kinase, found in Pyrobaculum calidifontis (strain DSM 21063 / JCM 11548 / VA1).